The sequence spans 244 residues: Small ribosomal subunit protein uS2 (244 aa).

The protein belongs to the universal ribosomal protein uS2 family.

This Desulforudis audaxviator (strain MP104C) protein is Small ribosomal subunit protein uS2.